We begin with the raw amino-acid sequence, 702 residues long: Elongation factor G 1 (702 aa).

The tr-type G domain maps to 8-290; sequence ERYRNIGISA…AVIDFLPSPV (283 aa). Residues 17–24, 88–92, and 142–145 each bind GTP; these read AHIDAGKT, DTPGH, and NKMD.

The protein belongs to the TRAFAC class translation factor GTPase superfamily. Classic translation factor GTPase family. EF-G/EF-2 subfamily.

Its subcellular location is the cytoplasm. Its function is as follows. Catalyzes the GTP-dependent ribosomal translocation step during translation elongation. During this step, the ribosome changes from the pre-translocational (PRE) to the post-translocational (POST) state as the newly formed A-site-bound peptidyl-tRNA and P-site-bound deacylated tRNA move to the P and E sites, respectively. Catalyzes the coordinated movement of the two tRNA molecules, the mRNA and conformational changes in the ribosome. The protein is Elongation factor G 1 of Cupriavidus pinatubonensis (strain JMP 134 / LMG 1197) (Cupriavidus necator (strain JMP 134)).